We begin with the raw amino-acid sequence, 596 residues long: MNTKGFAQKIQRTFHLIHQSHYTPPPNKISTHVEIFSELLTYVDYEWQRAAIGASRWVELAAEENEIHIPFNTKDERQVNFLIAIIHVAISLYSNSGVEPFADCDLEKILNGDYESSKFDWNVVFDIVLPNDVRLKEKTLKAAVVEEERVEPRPKRREITLGGQRPLQTRDVRSDSDLIVLSKLEAYDDVVERPRQNNTDIIIHRLGLAKMNPASNSILPAKISRIITEQVFGAGVNVDYIARPTEGFISLSTATYTVASYFERGIANYDINAVLDNIIDKTDQLNTTDTVVELPSIPPEDSSIEVATPSHETFFDINTMIYIIMCCGSITNPMIQRLNGIVTRYNTTNYVVSYPDTDDGRKKALAERAVITVDGKYYKCYNDIKADTDKRRILNPAVIKEVMISLRHYCGSVIHYRERMEATHISQVFCLLMGICYGGLDTKKIRCRWFEWPAVSNVPVTSSYAEFKGSNSGLPPYQCRKFTPRTVMTSFAHWNLWAWMLDLAIDKRMSSDRHLSIMKIYVLNAFSHLVLNSSLENSANILGPFPSFSGYTAFTSTSIVRDVSSCQRLAPFLLRMFSLVDYVAAAASSEASGSGV.

It is found in the virion. 120 subunits of the putative clamp protein VP8b appear to stabilize the capsid shell. The chain is Structural protein precursor VP8 from Oryza latifolia (Indian wild rice).